The primary structure comprises 349 residues: Phenylalanine--tRNA ligase alpha subunit (349 aa).

Residue glutamate 258 coordinates Mg(2+).

The protein belongs to the class-II aminoacyl-tRNA synthetase family. Phe-tRNA synthetase alpha subunit type 1 subfamily. Tetramer of two alpha and two beta subunits. Mg(2+) serves as cofactor.

It is found in the cytoplasm. The enzyme catalyses tRNA(Phe) + L-phenylalanine + ATP = L-phenylalanyl-tRNA(Phe) + AMP + diphosphate + H(+). The sequence is that of Phenylalanine--tRNA ligase alpha subunit from Rickettsia akari (strain Hartford).